The sequence spans 127 residues: Small ribosomal subunit protein uS8m (127 aa).

Belongs to the universal ribosomal protein uS8 family.

Its subcellular location is the mitochondrion. This chain is Small ribosomal subunit protein uS8m (RPS8), found in Acanthamoeba castellanii (Amoeba).